The sequence spans 169 residues: N5-carboxyaminoimidazole ribonucleotide mutase (169 aa).

Substrate contacts are provided by Ser-16, Asp-19, and Arg-46.

It belongs to the AIR carboxylase family. Class I subfamily.

The enzyme catalyses 5-carboxyamino-1-(5-phospho-D-ribosyl)imidazole + H(+) = 5-amino-1-(5-phospho-D-ribosyl)imidazole-4-carboxylate. It participates in purine metabolism; IMP biosynthesis via de novo pathway; 5-amino-1-(5-phospho-D-ribosyl)imidazole-4-carboxylate from 5-amino-1-(5-phospho-D-ribosyl)imidazole (N5-CAIR route): step 2/2. In terms of biological role, catalyzes the conversion of N5-carboxyaminoimidazole ribonucleotide (N5-CAIR) to 4-carboxy-5-aminoimidazole ribonucleotide (CAIR). The sequence is that of N5-carboxyaminoimidazole ribonucleotide mutase from Escherichia coli O157:H7.